Reading from the N-terminus, the 20-residue chain is Pregnancy-associated glycoprotein 55h (20 aa).

The N-linked (GlcNAc...) asparagine glycan is linked to asparagine 4.

Belongs to the peptidase A1 family. Highly expressed in the placenta between day 60 and day 100 of gestation.

Its subcellular location is the secreted. It localises to the extracellular space. The sequence is that of Pregnancy-associated glycoprotein 55h from Ovis aries (Sheep).